The sequence spans 346 residues: MSSTEEMSSVKNTTQVIGVDPSSTVRVTIVQSSTVYNDTPATLDKAEKFIVEAASKGAKLVLFPEAFIGGYPRGFRFGLAVGVHNEEGRDEFRNYHASAIKVPGPEVERLAELAGKNNVHLVMGAIEKDGYTLYCTALFFSPQGQFLGKHRKVMPTSLERCIWGQGDGSTIPVYDTPIGKIGAAICWENRMPLYRTALYAKGIEIYCAPTADYSLEWQASMIHIAVEGGCFVLSAHQFCKRREFPEHPDYLFNDIVDTKEHDPTVSGGGSVIISPLGKVLAGPNYESEGLVTADLDLGDIARAKLYFDVVGHYSKPDIFNLTVNEHPKKPVTFMTKVEKAEDESNK.

Ser-2 carries the N-acetylserine modification. The region spanning 25-297 (VRVTIVQSST…EGLVTADLDL (273 aa)) is the CN hydrolase domain. Glu-65 acts as the Proton acceptor in catalysis. The active-site Proton donor is the Lys-152. The active-site Nucleophile is Cys-186.

This sequence belongs to the carbon-nitrogen hydrolase superfamily. Nitrilase family.

The protein resides in the cell membrane. It catalyses the reaction a nitrile + 2 H2O = a carboxylate + NH4(+). Its function is as follows. Can convert indole-3-acetonitrile to the plant hormone indole-3-acetic acid. The polypeptide is Nitrilase 3 (NIT3) (Arabidopsis thaliana (Mouse-ear cress)).